The following is a 98-amino-acid chain: Acylphosphatase (98 aa).

Positions 10–96 (ARLLRIRGRV…TDGAGFDCLP (87 aa)) constitute an Acylphosphatase-like domain. Active-site residues include Arg25 and Asn43.

The protein belongs to the acylphosphatase family.

The catalysed reaction is an acyl phosphate + H2O = a carboxylate + phosphate + H(+). The chain is Acylphosphatase (acyP) from Azoarcus sp. (strain BH72).